The chain runs to 195 residues: Cysteine/O-acetylserine efflux protein (195 aa).

Topologically, residues 1 to 7 (MTPTLLS) are periplasmic. A helical transmembrane segment spans residues 8 to 28 (AFWTYTLITAMTPGPNNILAL). Residues 29–46 (SSATSHGFRQSTRVLAGM) are Cytoplasmic-facing. A helical transmembrane segment spans residues 47-67 (SLGFLIVMLLCAGISFSLAVI). Residues 68 to 69 (DP) lie on the Periplasmic side of the membrane. Residues 70-90 (AAVHLLSWAGAAYIVWLAWKI) form a helical membrane-spanning segment. The Cytoplasmic portion of the chain corresponds to 91-104 (ATSPTKEDGLQTKP). A helical membrane pass occupies residues 105 to 125 (ISFWASFALQFVNVKIILYGV). At 126 to 141 (TALSTFVLPQTQALSW) the chain is on the periplasmic side. The chain crosses the membrane as a helical span at residues 142–162 (VVGVSVLLAMIGTFGNVCWAL). The Cytoplasmic segment spans residues 163–176 (AGHLFQRLFRQYGR). Residues 177 to 194 (QLNIVLALLLVYCAVRIF) traverse the membrane as a helical segment. Position 195 (Tyr-195) is a topological domain, periplasmic.

It belongs to the Rht family.

The protein resides in the cell inner membrane. The catalysed reaction is O-acetyl-L-serine(in) = O-acetyl-L-serine(out). The enzyme catalyses L-cysteine(in) = L-cysteine(out). Exporter of O-acetylserine (OAS) and cysteine. The chain is Cysteine/O-acetylserine efflux protein (eamB) from Escherichia coli O1:K1 / APEC.